An 843-amino-acid chain; its full sequence is Protein P (843 aa).

Residues 1–177 (MPLSYQHFRK…FCGSPYSWEQ (177 aa)) form a terminal protein domain (TP) region. A spacer region spans residues 178–346 (DLQHGRLVFQ…YCLSHIVNLI (169 aa)). 2 disordered regions span residues 219-249 (RKSRLGPQPTQGQLAGRPQGGSGSIRARIHP) and 290-316 (STSKGHSSSGHAVELHHFPPNSSRSQS). Residues 290 to 299 (STSKGHSSSG) show a composition bias toward polar residues. The tract at residues 347–690 (EDWGPCAEHG…YMTLYPVARQ (344 aa)) is polymerase/reverse transcriptase domain (RT). A Reverse transcriptase domain is found at 357–600 (EHRIRTPRTP…YSLNFMGYVI (244 aa)). Mg(2+) is bound by residues aspartate 429, aspartate 551, and aspartate 552.

The protein belongs to the hepadnaviridae P protein family.

It carries out the reaction DNA(n) + a 2'-deoxyribonucleoside 5'-triphosphate = DNA(n+1) + diphosphate. It catalyses the reaction Endonucleolytic cleavage to 5'-phosphomonoester.. Its activity is regulated as follows. Activated by host HSP70 and HSP40 in vitro to be able to bind the epsilon loop of the pgRNA. Because deletion of the RNase H region renders the protein partly chaperone-independent, the chaperones may be needed indirectly to relieve occlusion of the RNA-binding site by this domain. Inhibited by several reverse-transcriptase inhibitors: Lamivudine, Adefovir and Entecavir. Functionally, multifunctional enzyme that converts the viral RNA genome into dsDNA in viral cytoplasmic capsids. This enzyme displays a DNA polymerase activity that can copy either DNA or RNA templates, and a ribonuclease H (RNase H) activity that cleaves the RNA strand of RNA-DNA heteroduplexes in a partially processive 3'- to 5'-endonucleasic mode. Neo-synthesized pregenomic RNA (pgRNA) are encapsidated together with the P protein, and reverse-transcribed inside the nucleocapsid. Initiation of reverse-transcription occurs first by binding the epsilon loop on the pgRNA genome, and is initiated by protein priming, thereby the 5'-end of (-)DNA is covalently linked to P protein. Partial (+)DNA is synthesized from the (-)DNA template and generates the relaxed circular DNA (RC-DNA) genome. After budding and infection, the RC-DNA migrates in the nucleus, and is converted into a plasmid-like covalently closed circular DNA (cccDNA). The activity of P protein does not seem to be necessary for cccDNA generation, and is presumably released from (+)DNA by host nuclear DNA repair machinery. The protein is Protein P of Homo sapiens (Human).